Consider the following 343-residue polypeptide: Dihydroorotase (343 aa).

Histidine 13 and histidine 15 together coordinate Zn(2+). Substrate-binding positions include 15–17 (HLR) and asparagine 41. Zn(2+)-binding residues include lysine 99, histidine 136, and histidine 174. The residue at position 99 (lysine 99) is an N6-carboxylysine. Histidine 136 is a substrate binding site. Position 219 (leucine 219) interacts with substrate. Aspartate 247 is a Zn(2+) binding site. The active site involves aspartate 247. Substrate-binding residues include histidine 251 and alanine 263.

The protein belongs to the metallo-dependent hydrolases superfamily. DHOase family. Class II DHOase subfamily. As to quaternary structure, homodimer. Zn(2+) serves as cofactor.

It catalyses the reaction (S)-dihydroorotate + H2O = N-carbamoyl-L-aspartate + H(+). Its pathway is pyrimidine metabolism; UMP biosynthesis via de novo pathway; (S)-dihydroorotate from bicarbonate: step 3/3. Catalyzes the reversible cyclization of carbamoyl aspartate to dihydroorotate. The chain is Dihydroorotase from Shewanella baltica (strain OS155 / ATCC BAA-1091).